Consider the following 20-residue polypeptide: Trypsin inhibitor DE-3 (20 aa).

The protein belongs to the protease inhibitor I3 (leguminous Kunitz-type inhibitor) family.

Its function is as follows. Inhibition of trypsin. This is Trypsin inhibitor DE-3 from Erythrina corallodendron (Coral tree).